The primary structure comprises 149 residues: D-aminoacyl-tRNA deacylase (149 aa).

A Gly-cisPro motif, important for rejection of L-amino acids motif is present at residues 137–138 (GP).

The protein belongs to the DTD family. In terms of assembly, homodimer.

Its subcellular location is the cytoplasm. It carries out the reaction glycyl-tRNA(Ala) + H2O = tRNA(Ala) + glycine + H(+). It catalyses the reaction a D-aminoacyl-tRNA + H2O = a tRNA + a D-alpha-amino acid + H(+). An aminoacyl-tRNA editing enzyme that deacylates mischarged D-aminoacyl-tRNAs. Also deacylates mischarged glycyl-tRNA(Ala), protecting cells against glycine mischarging by AlaRS. Acts via tRNA-based rather than protein-based catalysis; rejects L-amino acids rather than detecting D-amino acids in the active site. By recycling D-aminoacyl-tRNA to D-amino acids and free tRNA molecules, this enzyme counteracts the toxicity associated with the formation of D-aminoacyl-tRNA entities in vivo and helps enforce protein L-homochirality. The protein is D-aminoacyl-tRNA deacylase of Clostridioides difficile (strain 630) (Peptoclostridium difficile).